The chain runs to 301 residues: Oxygen-dependent coproporphyrinogen-III oxidase (301 aa).

Ser92 is a substrate binding site. His96 and His106 together coordinate a divalent metal cation. The Proton donor role is filled by His106. Position 108–110 (108–110 (NVR)) interacts with substrate. 2 residues coordinate a divalent metal cation: His145 and His175. The segment at 240 to 275 (YVEFNLVWDRGTLFGLQTGGRTESILMSMPPLVRWE) is important for dimerization. Position 258-260 (258-260 (GGR)) interacts with substrate.

The protein belongs to the aerobic coproporphyrinogen-III oxidase family. In terms of assembly, homodimer. A divalent metal cation is required as a cofactor.

It is found in the cytoplasm. The catalysed reaction is coproporphyrinogen III + O2 + 2 H(+) = protoporphyrinogen IX + 2 CO2 + 2 H2O. Its pathway is porphyrin-containing compound metabolism; protoporphyrin-IX biosynthesis; protoporphyrinogen-IX from coproporphyrinogen-III (O2 route): step 1/1. In terms of biological role, involved in the heme biosynthesis. Catalyzes the aerobic oxidative decarboxylation of propionate groups of rings A and B of coproporphyrinogen-III to yield the vinyl groups in protoporphyrinogen-IX. In Cronobacter sakazakii (strain ATCC BAA-894) (Enterobacter sakazakii), this protein is Oxygen-dependent coproporphyrinogen-III oxidase.